A 373-amino-acid polypeptide reads, in one-letter code: MATSASSHLNKGIKQMYMNLPQGEKIQLMYIWVDGTGEGLRCKTRTLDCDPKCVEELPEWNFDGSSTFQSEGSNSDMYLHPVAMFRDPFRRDPNKLVFCEVFKYNRKPAETNLRHSCKRIMDMVSSQHPWFGMEQEYTLMGTDGHPFGWPSNGFPGPQGPYYCGVGADKAYGRDIVEAHYRACLYAGIKITGTNAEVMPAQWEFQIGPCEGIRMGDHLWVARFILHRVCEDFGVIATFDPKPIPGNWNGAGCHTNFSTKAMREENGLRCIEEAIDKLSKRHQYHIRAYDPKGGLDNARRLTGFHETSNINDFSAGVANRSASIRIPRIVGQEKKGYFEDRRPSANCDPYAVTEAIVRTCLLNETGDEPFQYKN.

A2 bears the N-acetylalanine mark. The interval 2 to 25 (ATSASSHLNKGIKQMYMNLPQGEK) is required for glutamine-induced ubiquitination by CRL4(CRBN) and proteasomal degradation. N6-acetyllysine occurs at positions 11 and 14. The GS beta-grasp domain occupies 24 to 106 (EKIQLMYIWV…VFCEVFKYNR (83 aa)). Y104 carries the post-translational modification Phosphotyrosine. Positions 113-373 (LRHSCKRIMD…TGDEPFQYKN (261 aa)) constitute a GS catalytic domain. E134 is a binding site for ATP. E134, E136, E196, and E203 together coordinate Mn(2+). 203 to 208 (EFQIGP) is a binding site for ATP. 246–247 (NW) contacts L-glutamate. H253 is a Mn(2+) binding site. ATP contacts are provided by residues 255–257 (NFS), R319, and R324. R319 is an L-glutamate binding site. 336–338 (YFE) contacts ADP. E338 is a binding site for Mn(2+). R340 is a binding site for L-glutamate. S343 bears the Phosphoserine mark.

Belongs to the glutamine synthetase family. As to quaternary structure, decamer; composed of two pentamers. Interacts with PALMD. Interacts with RHOJ. Interacts with BEST2; this interaction tethers a fraction of GLUL to the membrane, causing a decrease of cytosolic glutamine synthase (GS) activity and inhibits the chloride channel activity of BEST2 by affecting the gating at the aperture in the absence of intracellular glutamate. The cofactor is Mg(2+). Requires Mn(2+) as cofactor. In terms of processing, palmitoylated; undergoes autopalmitoylation. Acetylated by EP300/p300; acetylation is stimulated by increased glutamine levels and promotes ubiquitin-mediated proteasomal degradation. Post-translationally, ubiquitinated by ZNRF1. Ubiquitinated by the DCX (DDB1-CUL4-X-box) E3 ubiquitin-protein ligase complex called CRL4(CRBN), leading to proteasomal degradation. In the adult liver, expression is restricted to a small population of hepatocytes which form only a small rim of one to three hepatocytes around the central veins. Expressed in lung microvascular endothelial cells.

It localises to the cytoplasm. Its subcellular location is the cytosol. The protein localises to the microsome. The protein resides in the mitochondrion. It is found in the cell membrane. It catalyses the reaction L-glutamate + NH4(+) + ATP = L-glutamine + ADP + phosphate + H(+). The catalysed reaction is L-cysteinyl-[protein] + hexadecanoyl-CoA = S-hexadecanoyl-L-cysteinyl-[protein] + CoA. Glutamine synthetase activity is inhibited by methionine sulfoximine (MSO). Glutamine synthetase that catalyzes the ATP-dependent conversion of glutamate and ammonia to glutamine. Its role depends on tissue localization: in the brain, it regulates the levels of toxic ammonia and converts neurotoxic glutamate to harmless glutamine, whereas in the liver, it is one of the enzymes responsible for the removal of ammonia. Plays a key role in ammonium detoxification during erythropoiesis: the glutamine synthetase activity is required to remove ammonium generated by porphobilinogen deaminase (HMBS) during heme biosynthesis to prevent ammonium accumulation and oxidative stress. Essential for proliferation of fetal skin fibroblasts. Independently of its glutamine synthetase activity, required for endothelial cell migration during vascular development. Involved in angiogenesis by regulating membrane localization and activation of the GTPase RHOJ, possibly by promoting RHOJ palmitoylation. May act as a palmitoyltransferase for RHOJ: able to autopalmitoylate and then transfer the palmitoyl group to RHOJ. Plays a role in ribosomal 40S subunit biogenesis. Through the interaction with BEST2, inhibits BEST2 channel activity by affecting the gating at the aperture in the absence of intracellular L-glutamate, but sensitizes BEST2 to intracellular L-glutamate, which promotes the opening of BEST2 and thus relieves its inhibitory effect on BEST2. This chain is Glutamine synthetase, found in Rattus norvegicus (Rat).